The chain runs to 201 residues: Probable quinol oxidase subunit 3 (201 aa).

The next 5 helical transmembrane spans lie at 20-40, 62-82, 91-111, 133-153, and 172-192; these read LGFW…FATL, LVLI…ISIY, LMMF…GFEI, FFIL…WIIC, and FIVS…FTAV.

This sequence belongs to the cytochrome c oxidase subunit 3 family.

The protein localises to the cell membrane. It carries out the reaction 2 a quinol + O2 = 2 a quinone + 2 H2O. Catalyzes quinol oxidation with the concomitant reduction of oxygen to water. The polypeptide is Probable quinol oxidase subunit 3 (qoxC) (Staphylococcus haemolyticus (strain JCSC1435)).